Reading from the N-terminus, the 85-residue chain is UPF0297 protein CHY_0540 (85 aa).

The protein belongs to the UPF0297 family.

The chain is UPF0297 protein CHY_0540 from Carboxydothermus hydrogenoformans (strain ATCC BAA-161 / DSM 6008 / Z-2901).